The chain runs to 336 residues: DNA repair protein Rad51 homolog (336 aa).

Residues Met1–Gln10 are compositionally biased toward polar residues. Residues Met1 to Leu20 are disordered. Residue Gly124–Thr131 coordinates ATP.

It belongs to the RecA family. RAD51 subfamily. In terms of assembly, interacts with Rrp6; the interaction is required for the recruitment of spn-A to the DNA-damage response foci. As to expression, highly expressed in ovaries.

It localises to the nucleus. The protein resides in the cytoplasm. Its function is as follows. Plays an important role in homologous strand exchange, a key step in DNA repair through homologous recombination (HR). Binds to single and double-stranded DNA and exhibits DNA-dependent ATPase activity. Underwinds duplex DNA. Spindle genes are required for each of the symmetry-breaking steps that generate polarity during egg axis formation; oocyte positioning at the posterior of the cyst to generate the first AP polarity and inhibition of gurken (grk) signaling to the follicle cell layer to polarize first the AP axis and then DV axis. May have a role in female meiosis. In Drosophila melanogaster (Fruit fly), this protein is DNA repair protein Rad51 homolog (spn-A).